Here is a 457-residue protein sequence, read N- to C-terminus: Argininosuccinate lyase (457 aa).

Belongs to the lyase 1 family. Argininosuccinate lyase subfamily.

The protein resides in the cytoplasm. The enzyme catalyses 2-(N(omega)-L-arginino)succinate = fumarate + L-arginine. The protein operates within amino-acid biosynthesis; L-arginine biosynthesis; L-arginine from L-ornithine and carbamoyl phosphate: step 3/3. This chain is Argininosuccinate lyase, found in Sodalis glossinidius (strain morsitans).